Reading from the N-terminus, the 576-residue chain is Proline--tRNA ligase (576 aa).

The protein belongs to the class-II aminoacyl-tRNA synthetase family. ProS type 1 subfamily. Homodimer.

Its subcellular location is the cytoplasm. It carries out the reaction tRNA(Pro) + L-proline + ATP = L-prolyl-tRNA(Pro) + AMP + diphosphate. Its function is as follows. Catalyzes the attachment of proline to tRNA(Pro) in a two-step reaction: proline is first activated by ATP to form Pro-AMP and then transferred to the acceptor end of tRNA(Pro). As ProRS can inadvertently accommodate and process non-cognate amino acids such as alanine and cysteine, to avoid such errors it has two additional distinct editing activities against alanine. One activity is designated as 'pretransfer' editing and involves the tRNA(Pro)-independent hydrolysis of activated Ala-AMP. The other activity is designated 'posttransfer' editing and involves deacylation of mischarged Ala-tRNA(Pro). The misacylated Cys-tRNA(Pro) is not edited by ProRS. The polypeptide is Proline--tRNA ligase (Dechloromonas aromatica (strain RCB)).